A 151-amino-acid polypeptide reads, in one-letter code: Large ribosomal subunit protein uL15 (151 aa).

Over residues 1–14 (MRREKKSRAYRGSR) the composition is skewed to basic residues. Residues 1–33 (MRREKKSRAYRGSRTHGWGRVGQHRKSGSRGGR) are disordered.

Belongs to the universal ribosomal protein uL15 family. In terms of assembly, part of the 50S ribosomal subunit.

Functionally, binds to the 23S rRNA. This Thermofilum pendens (strain DSM 2475 / Hrk 5) protein is Large ribosomal subunit protein uL15.